The sequence spans 159 residues: Ribosome maturation factor RimP (159 aa).

Belongs to the RimP family.

The protein resides in the cytoplasm. Its function is as follows. Required for maturation of 30S ribosomal subunits. This chain is Ribosome maturation factor RimP, found in Streptococcus agalactiae serotype III (strain NEM316).